A 130-amino-acid chain; its full sequence is MEAILMIGVITLCVIFLLSGRNNKKIQEARELEDYLEDLNQRIAQRTQILSELNEVITNRSVDKSVNMSACEIAVLDLYEQSNIRIPSDIIEDMVNQRLQTEQDVLNYIETQRTYWKLENQKKLYRGSLK.

The helical transmembrane segment at methionine 1–glycine 20 threads the bilayer. Residues leucine 18 to isoleucine 57 are a coiled coil. Positions alanine 70–lysine 130 are DNA-binding.

Belongs to the phi29likevirus gp16.7 family. In terms of assembly, homodimer; homooligomer. Interacts with DNA; one dsDNA binding subunit is constituted by three p16.7 dimers.

It localises to the host cell membrane. Functionally, binds to the long stretches of ssDNA of the viral DNA replication intermediates created during the protein-primed mechanism of replication of the viral genome and attaches the viral DNA to the membrane of the infected cells. Required for the redistribution of replicating viral DNA from the initial replication site to membrane-associated sites surrounding the nucleoid. Required for the second pull step of DNA ejection. This is DNA replication protein 16.7 (16.7) from Bacillus subtilis (Bacteriophage PZA).